Reading from the N-terminus, the 601-residue chain is DNA ligase 2 (601 aa).

E263 is an ATP binding site. K265 acts as the N6-AMP-lysine intermediate in catalysis. Positions 270, 285, 314, 354, 432, and 438 each coordinate ATP.

This sequence belongs to the ATP-dependent DNA ligase family. Mg(2+) is required as a cofactor.

The catalysed reaction is ATP + (deoxyribonucleotide)n-3'-hydroxyl + 5'-phospho-(deoxyribonucleotide)m = (deoxyribonucleotide)n+m + AMP + diphosphate.. DNA ligase that seals nicks in double-stranded DNA during DNA replication, DNA recombination and DNA repair. In Thermofilum pendens (strain DSM 2475 / Hrk 5), this protein is DNA ligase 2.